The chain runs to 188 residues: Translocon-associated protein subunit beta (188 aa).

An N-terminal signal peptide occupies residues 1–15; sequence MKFSLFALLFVVVSC. Topologically, residues 16-151 are lumenal; that stretch reads VDVGTQTRDA…EYDRRFAPKY (136 aa). N-linked (GlcNAc...) asparagine glycosylation is found at N93 and N109. The helical transmembrane segment at 152–172 threads the bilayer; the sequence is TYFLVFFLIVAPTTLGSFLLF. Topologically, residues 173–188 are cytoplasmic; it reads QQSKARFPNVIKKKST.

Belongs to the TRAP-beta family. As to quaternary structure, heterotetramer of TRAP-alpha, TRAP-beta, TRAP-delta and TRAP-gamma.

It is found in the endoplasmic reticulum membrane. Functionally, TRAP proteins are part of a complex whose function is to bind calcium to the ER membrane and thereby regulate the retention of ER resident proteins. This Caenorhabditis elegans protein is Translocon-associated protein subunit beta.